A 343-amino-acid chain; its full sequence is Endoglucanase C (343 aa).

Glutamate 140 (proton donor) is an active-site residue. Glutamate 280 acts as the Nucleophile in catalysis.

This sequence belongs to the glycosyl hydrolase 5 (cellulase A) family.

It catalyses the reaction Endohydrolysis of (1-&gt;4)-beta-D-glucosidic linkages in cellulose, lichenin and cereal beta-D-glucans.. It functions in the pathway glycan metabolism; cellulose degradation. This enzyme catalyzes the endohydrolysis of 1,4-beta-glucosidic linkages in cellulose, lichenin and cereal beta-D-glucans. The chain is Endoglucanase C (celC) from Acetivibrio thermocellus (Hungateiclostridium thermocellum).